Here is a 125-residue protein sequence, read N- to C-terminus: Late histone H2A.1 (125 aa).

Basic residues predominate over residues 1 to 18 (MSGRGKGKAKGTKSKTRS). Positions 1-21 (MSGRGKGKAKGTKSKTRSSRA) are disordered. Ser-2 is subject to N-acetylserine. Phosphoserine is present on Ser-2. Gln-104 bears the N5-methylglutamine mark. Residue Lys-119 forms a Glycyl lysine isopeptide (Lys-Gly) (interchain with G-Cter in ubiquitin) linkage.

It belongs to the histone H2A family. In terms of assembly, the nucleosome is a histone octamer containing two molecules each of H2A, H2B, H3 and H4 assembled in one H3-H4 heterotetramer and two H2A-H2B heterodimers. The octamer wraps approximately 147 bp of DNA. Post-translationally, monoubiquitination of Lys-119 gives a specific tag for epigenetic transcriptional repression. In terms of processing, phosphorylation of Ser-2 directly represses transcription.

The protein resides in the nucleus. The protein localises to the chromosome. Functionally, core component of nucleosome. Nucleosomes wrap and compact DNA into chromatin, limiting DNA accessibility to the cellular machineries which require DNA as a template. Histones thereby play a central role in transcription regulation, DNA repair, DNA replication and chromosomal stability. DNA accessibility is regulated via a complex set of post-translational modifications of histones, also called histone code, and nucleosome remodeling. The polypeptide is Late histone H2A.1 (Psammechinus miliaris (Green sea urchin)).